A 192-amino-acid polypeptide reads, in one-letter code: Xanthine phosphoribosyltransferase (192 aa).

Xanthine-binding residues include leucine 20 and asparagine 27. Alanine 128–alanine 132 lines the 5-phospho-alpha-D-ribose 1-diphosphate pocket. A xanthine-binding site is contributed by lysine 156.

It belongs to the purine/pyrimidine phosphoribosyltransferase family. Xpt subfamily. In terms of assembly, homodimer.

The protein localises to the cytoplasm. It catalyses the reaction XMP + diphosphate = xanthine + 5-phospho-alpha-D-ribose 1-diphosphate. The protein operates within purine metabolism; XMP biosynthesis via salvage pathway; XMP from xanthine: step 1/1. Its function is as follows. Converts the preformed base xanthine, a product of nucleic acid breakdown, to xanthosine 5'-monophosphate (XMP), so it can be reused for RNA or DNA synthesis. This chain is Xanthine phosphoribosyltransferase, found in Staphylococcus aureus (strain Mu3 / ATCC 700698).